Reading from the N-terminus, the 955-residue chain is Leucine--tRNA ligase (955 aa).

The 'HIGH' region signature appears at 51-61; it reads PYLNGVLHAGH. Residues 647 to 651 carry the 'KMSKS' region motif; sequence KLSKS. K650 is an ATP binding site.

It belongs to the class-I aminoacyl-tRNA synthetase family.

It is found in the cytoplasm. The catalysed reaction is tRNA(Leu) + L-leucine + ATP = L-leucyl-tRNA(Leu) + AMP + diphosphate. This chain is Leucine--tRNA ligase, found in Methanococcus maripaludis (strain DSM 14266 / JCM 13030 / NBRC 101832 / S2 / LL).